A 144-amino-acid polypeptide reads, in one-letter code: Large ribosomal subunit protein uL14 (144 aa).

The protein belongs to the universal ribosomal protein uL14 family. Part of the 50S ribosomal subunit. Forms a cluster with proteins L3 and L24e, part of which may contact the 16S rRNA in 2 intersubunit bridges.

In terms of biological role, binds to 23S rRNA. Forms part of two intersubunit bridges in the 70S ribosome. This Pyrobaculum arsenaticum (strain DSM 13514 / JCM 11321 / PZ6) protein is Large ribosomal subunit protein uL14.